Consider the following 151-residue polypeptide: Endoribonuclease YbeY (151 aa).

3 residues coordinate Zn(2+): His114, His118, and His124.

It belongs to the endoribonuclease YbeY family. The cofactor is Zn(2+).

Its subcellular location is the cytoplasm. Functionally, single strand-specific metallo-endoribonuclease involved in late-stage 70S ribosome quality control and in maturation of the 3' terminus of the 16S rRNA. The chain is Endoribonuclease YbeY from Hamiltonella defensa subsp. Acyrthosiphon pisum (strain 5AT).